Here is a 499-residue protein sequence, read N- to C-terminus: Tyrosine-protein kinase Blk (499 aa).

The disordered stretch occupies residues 1 to 34 (MGLLSSKRQVSEKGKGWSPVKIRTQDKAPPPLPP). Gly2 carries the N-myristoyl glycine lipid modification. The SH3 domain occupies 52–112 (EEERFVVALF…PSNFVAPVET (61 aa)). In terms of domain architecture, SH2 spans 118-214 (WFFRTISRKD…GLCQKLTLPC (97 aa)). Positions 235–488 (LKLVRKLGSG…FLQSVLEDFY (254 aa)) constitute a Protein kinase domain. Residues 241 to 249 (LGSGQFGEV) and Lys263 contribute to the ATP site. The active-site Proton acceptor is the Asp354. Tyr383 carries the post-translational modification Phosphotyrosine; by autocatalysis.

This sequence belongs to the protein kinase superfamily. Tyr protein kinase family. SRC subfamily. In terms of assembly, interacts with CBL (via SH2 domain). Interacts with CD79A and CD79B (via SH2 domain). In terms of processing, phosphorylated on tyrosine residues after antibody-mediated surface engagement of the B-cell antigen receptor (BCR). Post-translationally, ubiquitination of activated BLK by the UBE3A ubiquitin protein ligase leads to its degradation by the ubiquitin-proteasome pathway. As to expression, expressed in immature Vgamma2 gamma-delta T-cells (at protein level). Expressed in the B-cell lineage.

Its subcellular location is the cell membrane. The catalysed reaction is L-tyrosyl-[protein] + ATP = O-phospho-L-tyrosyl-[protein] + ADP + H(+). Antibody-mediated surface engagement of the B-cell antigen receptor (BCR) which results in the phosphorylation of BLK on tyrosine residues, stimulates the enzymatic activity. Its function is as follows. Non-receptor tyrosine kinase involved in B-lymphocyte development, differentiation and signaling. B-cell receptor (BCR) signaling requires a tight regulation of several protein tyrosine kinases and phosphatases, and associated coreceptors. Binding of antigen to the B-cell antigen receptor (BCR) triggers signaling that ultimately leads to B-cell activation. Signaling through BLK plays an important role in transmitting signals through surface immunoglobulins and supports the pro-B to pre-B transition, as well as the signaling for growth arrest and apoptosis downstream of B-cell receptor. Specifically binds and phosphorylates CD79A at 'Tyr-188'and 'Tyr-199', as well as CD79B at 'Tyr-196' and 'Tyr-207'. Also phosphorylates the immunoglobulin G receptor FCGR2. With FYN and LYN, plays an essential role in pre-B-cell receptor (pre-BCR)-mediated NF-kappa-B activation. Also contributes to BTK activation by indirectly stimulating BTK intramolecular autophosphorylation. In pancreatic islets, acts as a modulator of beta-cells function through the up-regulation of PDX1 and NKX6-1 and consequent stimulation of insulin secretion in response to glucose. Phosphorylates CGAS, promoting retention of CGAS in the cytosol. In Mus musculus (Mouse), this protein is Tyrosine-protein kinase Blk (Blk).